A 472-amino-acid chain; its full sequence is uncharacterized protein (472 aa).

The next 14 helical transmembrane spans lie at 14–34 (VIVGILLAGAFVAILNQTLLI), 53–73 (WLTTSFMLTNGILIPITAFLI), 80–100 (ALLITAMSIFTAGTVVGAFAP), 113–133 (AAGAGIMMPLMQTVFLTIFPI), 142–162 (MVGLVISFAPAIGPTLSGWAV), 169–189 (SLFYIILPFAVIDLILASILM), 202–222 (ILSVILSTFGFGGLLYGFSSV), 227–247 (WSSSTVLISLLVGVIALLLFI), 263–283 (FTFGVFSLTTLLGTLVFALLI), 302–322 (FDTGLMLLPGAVVMGFMSPII), 333–353 (GLAIAGFCIIFLTSLPFMQLT), 359–379 (AWIVVLYTVRLLGTAMIMMPV), 405–427 (VGGSIGTALLVSVMSNQAAHAGT), and 437–457 (GMNAAFIVAAVIALVGFLLSF).

This sequence belongs to the major facilitator superfamily. EmrB family.

It localises to the cell membrane. This is an uncharacterized protein from Bacillus subtilis (strain 168).